Consider the following 179-residue polypeptide: UPF0398 protein Bsph_0756 (179 aa).

The protein belongs to the UPF0398 family.

This is UPF0398 protein Bsph_0756 from Lysinibacillus sphaericus (strain C3-41).